The primary structure comprises 263 residues: Receptor expression-enhancing protein 3-A (263 aa).

A run of 2 helical transmembrane segments spans residues 2–22 (VSWI…PAYF) and 35–55 (YVRW…EAIA). 2 disordered regions span residues 161–228 (GDET…SMRS) and 240–263 (YASL…AHHL). Positions 199-214 (DDNTDEDVEVNSEDEV) are enriched in acidic residues. Over residues 242–251 (SLKHKPKKRP) the composition is skewed to basic residues.

This sequence belongs to the DP1 family.

Its subcellular location is the endoplasmic reticulum membrane. Microtubule-binding protein required to ensure proper cell division and nuclear envelope reassembly by sequestering the endoplasmic reticulum away from chromosomes during mitosis. Probably acts by clearing the endoplasmic reticulum membrane from metaphase chromosomes. This chain is Receptor expression-enhancing protein 3-A (reep3-a), found in Xenopus laevis (African clawed frog).